The sequence spans 531 residues: Apolipoprotein N-acyltransferase (531 aa).

The next 7 membrane-spanning stretches (helical) occupy residues 8 to 28, 34 to 54, 69 to 89, 105 to 125, 136 to 156, 178 to 198, and 206 to 226; these read IILL…LLAV, FGIF…IDGV, PAAI…WWLG, LTVV…VVIA, IAAL…LFTG, VVNL…PALI, and AGLA…FYRL. Residues 243 to 493 form the CN hydrolase domain; it reads VQPVIDQAKK…RGVIDTILPG (251 aa). E287 acts as the Proton acceptor in catalysis. K351 is an active-site residue. The active-site Nucleophile is the C405. Residues 507–527 traverse the membrane as a helical segment; it reads IFWLTTGILFLVAAISRLGFN.

This sequence belongs to the CN hydrolase family. Apolipoprotein N-acyltransferase subfamily.

The protein localises to the cell inner membrane. The enzyme catalyses N-terminal S-1,2-diacyl-sn-glyceryl-L-cysteinyl-[lipoprotein] + a glycerophospholipid = N-acyl-S-1,2-diacyl-sn-glyceryl-L-cysteinyl-[lipoprotein] + a 2-acyl-sn-glycero-3-phospholipid + H(+). The protein operates within protein modification; lipoprotein biosynthesis (N-acyl transfer). Catalyzes the phospholipid dependent N-acylation of the N-terminal cysteine of apolipoprotein, the last step in lipoprotein maturation. The protein is Apolipoprotein N-acyltransferase of Rhizobium meliloti (strain 1021) (Ensifer meliloti).